A 505-amino-acid chain; its full sequence is Probable cytosol aminopeptidase (505 aa).

Residues lysine 269 and aspartate 274 each coordinate Mn(2+). Lysine 281 is a catalytic residue. The Mn(2+) site is built by aspartate 292, aspartate 351, and glutamate 353. Arginine 355 is a catalytic residue.

Belongs to the peptidase M17 family. The cofactor is Mn(2+).

The protein resides in the cytoplasm. It carries out the reaction Release of an N-terminal amino acid, Xaa-|-Yaa-, in which Xaa is preferably Leu, but may be other amino acids including Pro although not Arg or Lys, and Yaa may be Pro. Amino acid amides and methyl esters are also readily hydrolyzed, but rates on arylamides are exceedingly low.. It catalyses the reaction Release of an N-terminal amino acid, preferentially leucine, but not glutamic or aspartic acids.. Functionally, presumably involved in the processing and regular turnover of intracellular proteins. Catalyzes the removal of unsubstituted N-terminal amino acids from various peptides. The protein is Probable cytosol aminopeptidase of Rhodococcus opacus (strain B4).